Consider the following 140-residue polypeptide: Large-conductance mechanosensitive channel 2 (140 aa).

3 consecutive transmembrane segments (helical) span residues 8 to 28 (FISKGNVMDLAVGVIIGAAFG), 30 to 50 (IVDSLVNDIIMPVIGAIFGGL), and 81 to 101 (GSFITVALNFVILAFIIFLMV).

Belongs to the MscL family. Homopentamer.

It is found in the cell inner membrane. In terms of biological role, channel that opens in response to stretch forces in the membrane lipid bilayer. May participate in the regulation of osmotic pressure changes within the cell. This Mesorhizobium japonicum (strain LMG 29417 / CECT 9101 / MAFF 303099) (Mesorhizobium loti (strain MAFF 303099)) protein is Large-conductance mechanosensitive channel 2.